We begin with the raw amino-acid sequence, 256 residues long: tRNA-cytidine(32) 2-sulfurtransferase (256 aa).

The short motif at 35-40 is the PP-loop motif element; that stretch reads SGGKDS. Cys110, Cys113, and Cys201 together coordinate [4Fe-4S] cluster.

Belongs to the TtcA family. As to quaternary structure, homodimer. Requires Mg(2+) as cofactor. The cofactor is [4Fe-4S] cluster.

It is found in the cytoplasm. It catalyses the reaction cytidine(32) in tRNA + S-sulfanyl-L-cysteinyl-[cysteine desulfurase] + AH2 + ATP = 2-thiocytidine(32) in tRNA + L-cysteinyl-[cysteine desulfurase] + A + AMP + diphosphate + H(+). The protein operates within tRNA modification. Catalyzes the ATP-dependent 2-thiolation of cytidine in position 32 of tRNA, to form 2-thiocytidine (s(2)C32). The sulfur atoms are provided by the cysteine/cysteine desulfurase (IscS) system. The protein is tRNA-cytidine(32) 2-sulfurtransferase of Coxiella burnetii (strain RSA 331 / Henzerling II).